A 64-amino-acid chain; its full sequence is Large ribosomal subunit protein bL28 (64 aa).

The disordered stretch occupies residues Met1 to Ser21.

It belongs to the bacterial ribosomal protein bL28 family.

The sequence is that of Large ribosomal subunit protein bL28 from Mycoplasma genitalium (strain ATCC 33530 / DSM 19775 / NCTC 10195 / G37) (Mycoplasmoides genitalium).